The following is a 237-amino-acid chain: Purine nucleoside phosphorylase DeoD-type (237 aa).

A purine D-ribonucleoside is bound at residue histidine 5. Phosphate contacts are provided by residues glycine 21, arginine 25, arginine 44, and 88-91 (RVGS). A purine D-ribonucleoside is bound by residues 180 to 182 (EME) and 204 to 205 (SD). Catalysis depends on aspartate 205, which acts as the Proton donor.

This sequence belongs to the PNP/UDP phosphorylase family. In terms of assembly, homohexamer; trimer of homodimers.

The catalysed reaction is a purine D-ribonucleoside + phosphate = a purine nucleobase + alpha-D-ribose 1-phosphate. It catalyses the reaction a purine 2'-deoxy-D-ribonucleoside + phosphate = a purine nucleobase + 2-deoxy-alpha-D-ribose 1-phosphate. Catalyzes the reversible phosphorolytic breakdown of the N-glycosidic bond in the beta-(deoxy)ribonucleoside molecules, with the formation of the corresponding free purine bases and pentose-1-phosphate. This Edwardsiella ictaluri (strain 93-146) protein is Purine nucleoside phosphorylase DeoD-type.